We begin with the raw amino-acid sequence, 152 residues long: D-aminoacyl-tRNA deacylase (152 aa).

The Gly-cisPro motif, important for rejection of L-amino acids signature appears at Gly-142 to Pro-143.

Belongs to the DTD family. As to quaternary structure, homodimer.

Its subcellular location is the cytoplasm. It catalyses the reaction glycyl-tRNA(Ala) + H2O = tRNA(Ala) + glycine + H(+). The catalysed reaction is a D-aminoacyl-tRNA + H2O = a tRNA + a D-alpha-amino acid + H(+). Functionally, an aminoacyl-tRNA editing enzyme that deacylates mischarged D-aminoacyl-tRNAs. Also deacylates mischarged glycyl-tRNA(Ala), protecting cells against glycine mischarging by AlaRS. Acts via tRNA-based rather than protein-based catalysis; rejects L-amino acids rather than detecting D-amino acids in the active site. By recycling D-aminoacyl-tRNA to D-amino acids and free tRNA molecules, this enzyme counteracts the toxicity associated with the formation of D-aminoacyl-tRNA entities in vivo and helps enforce protein L-homochirality. In Burkholderia cenocepacia (strain ATCC BAA-245 / DSM 16553 / LMG 16656 / NCTC 13227 / J2315 / CF5610) (Burkholderia cepacia (strain J2315)), this protein is D-aminoacyl-tRNA deacylase.